The sequence spans 137 residues: Sporulation-specific cell division protein SsgB (137 aa).

The protein belongs to the SsgA family. As to quaternary structure, interacts with SsgA. Interacts with FtsZ (via N-terminus).

The protein resides in the cell septum. Its function is as follows. Involved in sporulation-specific cell division. Required for early stages of sporulation. Important in the process of growth cessation prior to sporulation-specific cell division. Recruits cell division protein FtsZ to the future septum sites and tethers the contractile ring structure (Z ring) to the cytoplasmic membrane during sporulation. Stimulates polymerization and filament length of FtsZ in vitro. This is Sporulation-specific cell division protein SsgB from Streptomyces coelicolor (strain ATCC BAA-471 / A3(2) / M145).